The sequence spans 131 residues: MTTKRKPYVRPMTSTWWKKLPFYRFYMLREGTAVPTVWFSIELIFGLFALKHGAESWMGFVGFLQNPVVVILNLITLAAALLHTKTWFELAPKAANIIVKDEKMGPEPIIKGLWVVTAVVTVVILYVALFW.

3 helical membrane passes run Glu30–Leu50, Trp57–Leu77, and Ile109–Leu129.

Belongs to the FrdC family. In terms of assembly, part of an enzyme complex containing four subunits: a flavoprotein (FrdA), an iron-sulfur protein (FrdB), and two hydrophobic anchor proteins (FrdC and FrdD).

Its subcellular location is the cell inner membrane. Two distinct, membrane-bound, FAD-containing enzymes are responsible for the catalysis of fumarate and succinate interconversion; fumarate reductase is used in anaerobic growth, and succinate dehydrogenase is used in aerobic growth. Anchors the catalytic components of the fumarate reductase complex to the cell inner membrane, binds quinones. This chain is Fumarate reductase subunit C, found in Salmonella dublin (strain CT_02021853).